The chain runs to 163 residues: Transcription elongation factor GreA (163 aa).

Positions 45–65 (NAEYHAAREKQAFIEARINEL) form a coiled coil.

The protein belongs to the GreA/GreB family.

Functionally, necessary for efficient RNA polymerase transcription elongation past template-encoded arresting sites. The arresting sites in DNA have the property of trapping a certain fraction of elongating RNA polymerases that pass through, resulting in locked ternary complexes. Cleavage of the nascent transcript by cleavage factors such as GreA or GreB allows the resumption of elongation from the new 3'terminus. GreA releases sequences of 2 to 3 nucleotides. In Helicobacter hepaticus (strain ATCC 51449 / 3B1), this protein is Transcription elongation factor GreA.